Reading from the N-terminus, the 184-residue chain is Adenylate kinase 1 (184 aa).

11–16 (GAGKGT) lines the ATP pocket. The interval 31-60 (STGDILRQAMKEQTPLGIKAQSYVDSGELV) is NMP. AMP-binding positions include Thr32, Arg37, 58 to 60 (ELV), 86 to 89 (GFPR), and Gln93. Residues 127–133 (SRGRKDD) are LID. Residue Arg128 coordinates ATP. 2 residues coordinate AMP: Arg130 and Arg141. Gln169 contributes to the ATP binding site.

This sequence belongs to the adenylate kinase family. In terms of assembly, monomer.

The protein resides in the cytoplasm. It carries out the reaction AMP + ATP = 2 ADP. It participates in purine metabolism; AMP biosynthesis via salvage pathway; AMP from ADP: step 1/1. In terms of biological role, catalyzes the reversible transfer of the terminal phosphate group between ATP and AMP. Plays an important role in cellular energy homeostasis and in adenine nucleotide metabolism. The chain is Adenylate kinase 1 from Nostoc sp. (strain PCC 7120 / SAG 25.82 / UTEX 2576).